Here is a 388-residue protein sequence, read N- to C-terminus: Formate-dependent phosphoribosylglycinamide formyltransferase (388 aa).

N(1)-(5-phospho-beta-D-ribosyl)glycinamide contacts are provided by residues 21–22 (EL) and E81. ATP is bound by residues R113, K154, 159–164 (SSGHGQ), 193–196 (EEFI), and E201. An ATP-grasp domain is found at 118–306 (KFAAEELGLK…EFALHVRAVL (189 aa)). 2 residues coordinate Mg(2+): E265 and E277. Residues D284, K352, and 359–360 (RR) contribute to the N(1)-(5-phospho-beta-D-ribosyl)glycinamide site.

It belongs to the PurK/PurT family. Homodimer.

The enzyme catalyses N(1)-(5-phospho-beta-D-ribosyl)glycinamide + formate + ATP = N(2)-formyl-N(1)-(5-phospho-beta-D-ribosyl)glycinamide + ADP + phosphate + H(+). Its pathway is purine metabolism; IMP biosynthesis via de novo pathway; N(2)-formyl-N(1)-(5-phospho-D-ribosyl)glycinamide from N(1)-(5-phospho-D-ribosyl)glycinamide (formate route): step 1/1. In terms of biological role, involved in the de novo purine biosynthesis. Catalyzes the transfer of formate to 5-phospho-ribosyl-glycinamide (GAR), producing 5-phospho-ribosyl-N-formylglycinamide (FGAR). Formate is provided by PurU via hydrolysis of 10-formyl-tetrahydrofolate. In Nitratiruptor sp. (strain SB155-2), this protein is Formate-dependent phosphoribosylglycinamide formyltransferase.